The following is a 292-amino-acid chain: MIKITVPATSANIGPGFDSLGVALKLYLTLEVYEETSEWQVIHDYGANMPSDVNNFIVKTALLLAPNLTPHRIVVKSDIPLARGLGSSSSALLAGLAMANVLADMRLNNDALLKQATALEGHPDNVAPALLGGSVAAFYDGEQVYHAPLSLPKDINFITFIPNYELLTTEARNALPAKMTFKDSVAASAISNTLTAALNAGDFNTARVLIEKDQFHEQARAHLAPHLKIIRDTAHQLEIIGTYLSGAGPTVITLVSKDNATKLLKVLTNMALPGKLLLLEPDYTGLQITKNN.

Proline 80–serine 90 contributes to the ATP binding site.

This sequence belongs to the GHMP kinase family. Homoserine kinase subfamily.

It is found in the cytoplasm. The catalysed reaction is L-homoserine + ATP = O-phospho-L-homoserine + ADP + H(+). The protein operates within amino-acid biosynthesis; L-threonine biosynthesis; L-threonine from L-aspartate: step 4/5. In terms of biological role, catalyzes the ATP-dependent phosphorylation of L-homoserine to L-homoserine phosphate. In Leuconostoc mesenteroides subsp. mesenteroides (strain ATCC 8293 / DSM 20343 / BCRC 11652 / CCM 1803 / JCM 6124 / NCDO 523 / NBRC 100496 / NCIMB 8023 / NCTC 12954 / NRRL B-1118 / 37Y), this protein is Homoserine kinase.